We begin with the raw amino-acid sequence, 706 residues long: ATP-dependent DNA helicase HMI1, mitochondrial (706 aa).

The UvrD-like helicase ATP-binding domain occupies 5 to 277 (TPSQWKVINK…LKLFDNFRST (273 aa)). Residues 29–34 (GSGKTL) and R275 each bind ATP. One can recognise a UvrD-like helicase C-terminal domain in the interval 278-593 (PEIISLASKI…KLSTIHSAKG (316 aa)). A propeptide spans 693 to 706 (YSSLRGCKSVFRRI) (cleaved upon import into mitochondrion).

It belongs to the helicase family. UvrD subfamily. The cofactor is Mg(2+).

Its subcellular location is the mitochondrion inner membrane. The catalysed reaction is Couples ATP hydrolysis with the unwinding of duplex DNA by translocating in the 3'-5' direction.. The enzyme catalyses ATP + H2O = ADP + phosphate + H(+). Its function is as follows. Required for mitochondrial genome maintenance and mitochondrial DNA inheritance. This is ATP-dependent DNA helicase HMI1, mitochondrial (HMI1) from Saccharomyces cerevisiae (strain ATCC 204508 / S288c) (Baker's yeast).